The following is a 392-amino-acid chain: NADH dehydrogenase-like protein YjlD (392 aa).

It belongs to the NADH dehydrogenase family. The cofactor is FAD.

In Bacillus subtilis (strain 168), this protein is NADH dehydrogenase-like protein YjlD (yjlD).